The chain runs to 537 residues: Extracellular exo-inulinase (537 aa).

The first 19 residues, 1 to 19 (MAPLSKALSVFMLMGITYA), serve as a signal peptide directing secretion. Asn40 and Asp41 together coordinate beta-D-fructose. Asp41 (nucleophile) is an active-site residue. Asn49 carries N-linked (GlcNAc...) asparagine glycosylation. Gln57 and Trp65 together coordinate beta-D-fructose. The N-linked (GlcNAc...) asparagine glycan is linked to Asn67. Ser103 provides a ligand contact to beta-D-fructose. N-linked (GlcNAc...) asparagine glycosylation is found at Asn111 and Asn112. Beta-D-fructose-binding residues include Arg188, Asp189, and Glu241. Glu241 serves as the catalytic Proton donor/acceptor. Residues Asn254 and Asn300 are each glycosylated (N-linked (GlcNAc...) asparagine). Residue Trp335 coordinates beta-D-fructose. Residues Asn398 and Asn430 are each glycosylated (N-linked (GlcNAc...) asparagine).

The protein belongs to the glycosyl hydrolase 32 family.

It localises to the secreted. The catalysed reaction is Hydrolysis of terminal, non-reducing (2-&gt;1)- and (2-&gt;6)-linked beta-D-fructofuranose residues in fructans.. In terms of biological role, exo-inulinase involved in utilization of the plant storage polymer inulin, consisting of fructooligosaccharides with a degree of polymerization (DP) value from 2 to 60. Splits off terminal fructose units successively from the non-reducing end of the inulin molecule, and also hydrolyzes levan, stachyose and raffinose. Hydrolyzes both beta-2,1- as well as beta-2,6-fructosyl linkages in fructooligosaccharides. In Aspergillus awamori (Black koji mold), this protein is Extracellular exo-inulinase.